The primary structure comprises 58 residues: ATP synthase F(0) complex subunit k, mitochondrial (58 aa).

N6-acetyllysine is present on residues Lys-16 and Lys-17. The helical transmembrane segment at 23–45 (TLTGRMNCVLATYGGIALLVLYF) threads the bilayer.

In terms of assembly, component of the ATP synthase complex composed at least of ATP5F1A/subunit alpha, ATP5F1B/subunit beta, ATP5MC1/subunit c (homooctomer), MT-ATP6/subunit a, MT-ATP8/subunit 8, ATP5ME/subunit e, ATP5MF/subunit f, ATP5MG/subunit g, ATP5MK/subunit k, ATP5MJ/subunit j, ATP5F1C/subunit gamma, ATP5F1D/subunit delta, ATP5F1E/subunit epsilon, ATP5PF/subunit F6, ATP5PB/subunit b, ATP5PD/subunit d, ATP5PO/subunit OSCP. ATP synthase complex consists of a soluble F(1) head domain (subunits alpha(3) and beta(3)) - the catalytic core - and a membrane F(0) domain - the membrane proton channel (subunits c, a, 8, e, f, g, k and j). These two domains are linked by a central stalk (subunits gamma, delta, and epsilon) rotating inside the F1 region and a stationary peripheral stalk (subunits F6, b, d, and OSCP). The ATP synthase complex/complex V exists as a monomeric and a dimeric supercomplex that helps shape mitochondrial cristae to optimize proton flow.

It localises to the mitochondrion membrane. Its function is as follows. Subunit k, of the mitochondrial membrane ATP synthase complex (F(1)F(0) ATP synthase or Complex V) that produces ATP from ADP in the presence of a proton gradient across the membrane which is generated by electron transport complexes of the respiratory chain. ATP synthase complex consist of a soluble F(1) head domain - the catalytic core - and a membrane F(1) domain - the membrane proton channel. These two domains are linked by a central stalk rotating inside the F(1) region and a stationary peripheral stalk. During catalysis, ATP synthesis in the catalytic domain of F(1) is coupled via a rotary mechanism of the central stalk subunits to proton translocation. In vivo, can only synthesize ATP although its ATP hydrolase activity can be activated artificially in vitro. Part of the complex F(0) domain. Required for dimerization of the ATP synthase complex and as such regulates ATP synthesis in the mitochondria. The polypeptide is ATP synthase F(0) complex subunit k, mitochondrial (Mus musculus (Mouse)).